We begin with the raw amino-acid sequence, 429 residues long: MKFFIKTYGCQMNENDSEVARYYLEQEGYESAENENEADIVILNTCVVRKKAEDKFLSTIGELRKKNKKIGVMGCGAEKLKEDLFKRGVNFVIGTRAISRIPEAVELSIKGKKAAIFDDKLDEIDYRNILKRNSKHHAWITIIYGCNRFCTYCIVPYTRGREKSRKMDDILREVKNLSLNGVREITYLGQNVDAYGKDLNDGTSLAKLLNETKKIENIERIWFLTSYPTDFSLDIAREIASSEKIAKSIHLPVQHGSNKILKKMNRRYTIEEYYELIKSIREIVPDASISSDIIVGFPDETEDDFQQTVKLVEEIKFERLNLAIYSPREGTIAWKYFEDNVPRAIKTRRMAYLLNLQKEINKMLNESYLDKTVEVIVEERAKSGLFYGRDIRNKIIAFEGDESLIGKKILVKIKKTTAGPLYGDIIKII.

The region spanning 1–110 (MKFFIKTYGC…IPEAVELSIK (110 aa)) is the MTTase N-terminal domain. C10, C46, C75, C146, C150, and C153 together coordinate [4Fe-4S] cluster. Residues 132 to 364 (RNSKHHAWIT…NLQKEINKML (233 aa)) form the Radical SAM core domain. Positions 366 to 427 (ESYLDKTVEV…AGPLYGDIIK (62 aa)) constitute a TRAM domain.

This sequence belongs to the methylthiotransferase family. MiaB subfamily. Monomer. [4Fe-4S] cluster serves as cofactor.

It localises to the cytoplasm. It carries out the reaction N(6)-dimethylallyladenosine(37) in tRNA + (sulfur carrier)-SH + AH2 + 2 S-adenosyl-L-methionine = 2-methylsulfanyl-N(6)-dimethylallyladenosine(37) in tRNA + (sulfur carrier)-H + 5'-deoxyadenosine + L-methionine + A + S-adenosyl-L-homocysteine + 2 H(+). Catalyzes the methylthiolation of N6-(dimethylallyl)adenosine (i(6)A), leading to the formation of 2-methylthio-N6-(dimethylallyl)adenosine (ms(2)i(6)A) at position 37 in tRNAs that read codons beginning with uridine. In Thermosipho africanus (strain TCF52B), this protein is tRNA-2-methylthio-N(6)-dimethylallyladenosine synthase.